We begin with the raw amino-acid sequence, 38 residues long: NAD-reducing hydrogenase HoxS subunit beta (38 aa).

Belongs to the [NiFe]/[NiFeSe] hydrogenase large subunit family. As to quaternary structure, tetramer of an alpha and a gamma subunits (flavin-containing dimer), and a delta and a nickel-containing beta subunits (hydrogenase dimer). FMN is required as a cofactor. Ni(2+) serves as cofactor.

Its subcellular location is the cytoplasm. The catalysed reaction is H2 + NAD(+) = NADH + H(+). In Rhodococcus opacus (Nocardia opaca), this protein is NAD-reducing hydrogenase HoxS subunit beta (hoxH).